The primary structure comprises 133 residues: ATP synthase epsilon chain (133 aa).

Belongs to the ATPase epsilon chain family. F-type ATPases have 2 components, CF(1) - the catalytic core - and CF(0) - the membrane proton channel. CF(1) has five subunits: alpha(3), beta(3), gamma(1), delta(1), epsilon(1). CF(0) has three main subunits: a, b and c.

It localises to the cell membrane. In terms of biological role, produces ATP from ADP in the presence of a proton gradient across the membrane. This is ATP synthase epsilon chain from Lawsonia intracellularis (strain PHE/MN1-00).